Consider the following 266-residue polypeptide: Non-structural maintenance of chromosomes element 1 homolog (266 aa).

An interaction with NSMCE3 region spans residues 1–102; sequence MQGSTRRAGA…SVSKMATDFA (102 aa). The RING-type; atypical zinc finger occupies 191–232; the sequence is CNICHSLLIQGQSCETCGIRMHLPCVAKYFQSTAEPRCPHCN. The disordered stretch occupies residues 246–266; it reads EKEREAGISKSSRKSLRTRQH. The segment covering 256–266 has biased composition (basic residues); sequence SSRKSLRTRQH.

This sequence belongs to the NSE1 family. As to quaternary structure, component of the SMC5-SMC6 complex which consists at least of SMC5, SMC6, NSMCE2, NSMCE1, NSMCE4A or EID3 and NSMCE3. NSMCE1, NSMCE4A or EID3 and NSMCE3 probably form a subcomplex that bridges the head domains of the SMC5-SMC6 heterodimer. Interacts with NSMCE3. In terms of processing, ubiquitinated.

It localises to the nucleus. Its subcellular location is the chromosome. The protein resides in the telomere. The catalysed reaction is S-ubiquitinyl-[E2 ubiquitin-conjugating enzyme]-L-cysteine + [acceptor protein]-L-lysine = [E2 ubiquitin-conjugating enzyme]-L-cysteine + N(6)-ubiquitinyl-[acceptor protein]-L-lysine.. Functionally, RING-type zinc finger-containing E3 ubiquitin ligase that assembles with melanoma antigen protein (MAGE) to catalyze the direct transfer of ubiquitin from E2 ubiquitin-conjugating enzyme to a specific substrate. Within MAGE-RING ubiquitin ligase complex, MAGE stimulates and specifies ubiquitin ligase activity likely through recruitment and/or stabilization of the E2 ubiquitin-conjugating enzyme at the E3:substrate complex. Involved in maintenance of genome integrity, DNA damage response and DNA repair. NSMCE3/MAGEG1 and NSMCE1 ubiquitin ligase are components of SMC5-SMC6 complex and may positively regulate homologous recombination-mediated DNA repair. This is Non-structural maintenance of chromosomes element 1 homolog (Nsmce1) from Rattus norvegicus (Rat).